We begin with the raw amino-acid sequence, 666 residues long: Mitogen-activated protein kinase kinase kinase ANP1 (666 aa).

The region spanning 69 to 331 (WRKGQLIGRG…ASELLKHPFV (263 aa)) is the Protein kinase domain. ATP-binding positions include 75-83 (IGRGAFGTV) and Lys-98. Residues 101 to 131 (LIAANFASKEKTQAHIQELEEEVKLLKNLSH) adopt a coiled-coil conformation. Glycyl lysine isopeptide (Lys-Gly) (interchain with G-Cter in ubiquitin) cross-links involve residues Lys-109 and Lys-111. The active-site Proton acceptor is Asp-197. Over residues 452 to 464 (KFDESPGNGEKES) the composition is skewed to basic and acidic residues. Disordered regions lie at residues 452-481 (KFDESPGNGEKESTMSMECDQPSYSEDDDE), 536-592 (GFLK…DGVS), and 635-666 (QEIMRQAGLGSSPRDRGMSRQREKSRFASPGK). Positions 538–558 (LKLPPKSRSPSRGPLGGSPSR) are enriched in low complexity. Over residues 560 to 569 (TDATSCSKSP) the composition is skewed to polar residues. Residues 620 to 643 (KKWKEELDQELERKRQEIMRQAGL) are a coiled coil. Residues 647-660 (PRDRGMSRQREKSR) are compositionally biased toward basic and acidic residues.

Belongs to the protein kinase superfamily. STE Ser/Thr protein kinase family. MAP kinase kinase kinase subfamily. As to expression, expressed in roots, inflorescence stems, flower buds and flowers. Low amount in rosette and cauline leaves.

The catalysed reaction is L-seryl-[protein] + ATP = O-phospho-L-seryl-[protein] + ADP + H(+). It carries out the reaction L-threonyl-[protein] + ATP = O-phospho-L-threonyl-[protein] + ADP + H(+). In terms of biological role, may be involved in an oxidative stress-mediated signaling cascade that phosphorylates downstream MAP kinases MPK3 and MPK6. May suppress auxin signaling that promotes cell cycle. Functionally redundant to ANP2 and ANP3 in the positive regulation of cytokinesis. In Arabidopsis thaliana (Mouse-ear cress), this protein is Mitogen-activated protein kinase kinase kinase ANP1 (ANP1).